A 2282-amino-acid polypeptide reads, in one-letter code: Ectopic P granules protein 5 homolog (2282 aa).

It belongs to the EPG5 family.

Functionally, involved in autophagy. The sequence is that of Ectopic P granules protein 5 homolog from Aedes aegypti (Yellowfever mosquito).